Here is a 183-residue protein sequence, read N- to C-terminus: Capsid protein (183 aa).

The tract at residues 136-183 (NAPILSTLPETTVVRRRGRSPRRRTPSPRRRRSQSPRRRRSQSRESQC) is disordered. Residues 149–176 (VRRRGRSPRRRTPSPRRRRSQSPRRRRS) are compositionally biased toward basic residues. 3 positions are modified to phosphoserine; by host: Ser155, Ser162, and Ser170. Residues 155–161 (SPRRRTP) form a 1; half-length repeat. A 3 X 8 AA repeats of S-P-R-R-R-[PR]-S-Q region spans residues 155 to 177 (SPRRRTPSPRRRRSQSPRRRRSQ). The Bipartite nuclear localization signal motif lies at 158 to 175 (RRTPSPRRRRSQSPRRRR). 2 consecutive repeat copies span residues 162–169 (SPRRRRSQ) and 170–177 (SPRRRRSQ). Residues 177–183 (QSRESQC) are RNA binding.

Belongs to the orthohepadnavirus core antigen family. Homodimerizes, then multimerizes. Interacts with cytosol exposed regions of viral L glycoprotein present in the reticulum-to-Golgi compartment. Interacts with human FLNB. Phosphorylated form interacts with host importin alpha; this interaction depends on the exposure of the NLS, which itself depends upon genome maturation and/or phosphorylation of the capsid protein. Interacts with host NUP153. In terms of processing, phosphorylated by host SRPK1, SRPK2, and maybe protein kinase C or GAPDH. Phosphorylation is critical for pregenomic RNA packaging. Protein kinase C phosphorylation is stimulated by HBx protein and may play a role in transport of the viral genome to the nucleus at the late step during the viral replication cycle.

The protein localises to the virion. The protein resides in the host cytoplasm. In terms of biological role, self assembles to form an icosahedral capsid. Most capsids appear to be large particles with an icosahedral symmetry of T=4 and consist of 240 copies of capsid protein, though a fraction forms smaller T=3 particles consisting of 180 capsid proteins. Entering capsids are transported along microtubules to the nucleus. Phosphorylation of the capsid is thought to induce exposure of nuclear localization signal in the C-terminal portion of the capsid protein that allows binding to the nuclear pore complex via the importin (karyopherin-) alpha and beta. Capsids are imported in intact form through the nuclear pore into the nuclear basket, where it probably binds NUP153. Only capsids that contain the mature viral genome can release the viral DNA and capsid protein into the nucleoplasm. Immature capsids get stuck in the basket. Capsids encapsulate the pre-genomic RNA and the P protein. Pre-genomic RNA is reverse-transcribed into DNA while the capsid is still in the cytoplasm. The capsid can then either be directed to the nucleus, providing more genomes for transcription, or bud through the endoplasmic reticulum to provide new virions. In Homo sapiens (Human), this protein is Capsid protein.